Consider the following 391-residue polypeptide: Phosphopentomutase (391 aa).

Positions 12, 285, 290, 326, 327, and 338 each coordinate Mn(2+).

It belongs to the phosphopentomutase family. Mn(2+) serves as cofactor.

It localises to the cytoplasm. The catalysed reaction is 2-deoxy-alpha-D-ribose 1-phosphate = 2-deoxy-D-ribose 5-phosphate. It carries out the reaction alpha-D-ribose 1-phosphate = D-ribose 5-phosphate. It functions in the pathway carbohydrate degradation; 2-deoxy-D-ribose 1-phosphate degradation; D-glyceraldehyde 3-phosphate and acetaldehyde from 2-deoxy-alpha-D-ribose 1-phosphate: step 1/2. Its function is as follows. Isomerase that catalyzes the conversion of deoxy-ribose 1-phosphate (dRib-1-P) and ribose 1-phosphate (Rib-1-P) to deoxy-ribose 5-phosphate (dRib-5-P) and ribose 5-phosphate (Rib-5-P), respectively. The sequence is that of Phosphopentomutase from Herpetosiphon aurantiacus (strain ATCC 23779 / DSM 785 / 114-95).